A 142-amino-acid chain; its full sequence is Large ribosomal subunit protein uL13 (142 aa).

The protein belongs to the universal ribosomal protein uL13 family. Part of the 50S ribosomal subunit.

In terms of biological role, this protein is one of the early assembly proteins of the 50S ribosomal subunit, although it is not seen to bind rRNA by itself. It is important during the early stages of 50S assembly. The sequence is that of Large ribosomal subunit protein uL13 from Shewanella amazonensis (strain ATCC BAA-1098 / SB2B).